We begin with the raw amino-acid sequence, 297 residues long: Protoheme IX farnesyltransferase 1 (297 aa).

The next 9 helical transmembrane spans lie at 23 to 43 (VVVLMLITSLVGMFLATRAGV), 45 to 65 (WSVLLFGNLGIALCAGGAAAV), 93 to 113 (LPALLFALALALLGMALLLMF), 117 to 137 (LTAWLTLASLLGYAVLYTGFL), 145 to 165 (IVIGGLAGAAPPLLGWVAVSG), 171 to 191 (PLLLVLIIFAWTPPHFWALAI), 216 to 236 (LHILLYTLILLAVTLLPYAIH), 241 to 261 (LYLVCALALGLRFLQWAWVLY), and 277 to 297 (IGYLFALFIALLVDHYLLLNL).

Belongs to the UbiA prenyltransferase family. Protoheme IX farnesyltransferase subfamily.

Its subcellular location is the cell inner membrane. The enzyme catalyses heme b + (2E,6E)-farnesyl diphosphate + H2O = Fe(II)-heme o + diphosphate. Its pathway is porphyrin-containing compound metabolism; heme O biosynthesis; heme O from protoheme: step 1/1. Its function is as follows. Converts heme B (protoheme IX) to heme O by substitution of the vinyl group on carbon 2 of heme B porphyrin ring with a hydroxyethyl farnesyl side group. This Pseudomonas putida (strain W619) protein is Protoheme IX farnesyltransferase 1.